A 546-amino-acid chain; its full sequence is DDB1- and CUL4-associated factor 11 (546 aa).

Over residues 1-19 (MGSRNSSSAGSGSGDPSEG) the composition is skewed to low complexity. The segment at 1–40 (MGSRNSSSAGSGSGDPSEGLPRRGAGLRRSEEEEEEDEDV) is disordered. A phosphoserine mark is found at L49 and S75. WD repeat units follow at residues 170-210 (SYSQ…RKFK), 216-258 (DVGW…TALD), 263-302 (ERRF…RTLQ), 305-345 (SHED…EDDP), 353-392 (GHQD…SREG), 435-480 (GVLH…KKLT), and 481-520 (NHKA…YFQD). The tract at residues 523-546 (PESEECASAPAPVPQSSTPFSSPQ) is disordered. Residues 536–546 (PQSSTPFSSPQ) are compositionally biased toward polar residues.

As to quaternary structure, interacts with DDB1 and CUL4A.

It participates in protein modification; protein ubiquitination. In terms of biological role, may function as a substrate receptor for CUL4-DDB1 E3 ubiquitin-protein ligase complex. In Homo sapiens (Human), this protein is DDB1- and CUL4-associated factor 11 (DCAF11).